Reading from the N-terminus, the 553-residue chain is MYCVQCEQTMVTPKGNGCSFSQGMCGKTAETSDLQDLLIATLHSLSAWALKAREHNIIIHEADAFAPRAFFATLTNVNFDSARIAGYAQQALIYRNQLIKAVNEVEPNPNIDHPLANIELNGISVEQLALQAKQFALDTDRQQIGEEAHGVRLLCLYGLKGAAAYMEHAYVLDKFDNDIYAEYHGFMSWLGTQPGDLNELLEKALAIGSMNFKVMAMLDAGETEHFGNPVPAMVNVRPVKGKCILISGHDLKDLKELLEQTEGKGINVYTHGEMLPAHGYPELKKYKHLVGNFGSGWQNQQKEFARFPGAIVMTSNCLIDPNVGDYADRIFTRNIVGWPGVTHLEDHDFSPVIEKALQCDGFPYTELEHLITVGFGRKTLIDASDAVIDLVKAGKLSHVFVIGGCDGDKEERHYYTDLAYALPKDTAVLTLGCGKYRFNKLDFGTIDGGLPRLLDAGQCNDTYSAIMLAVTLSQKLGIGLNELPLSIVLSWFEQKAIIVLLTLLALGVKNVYSGPSKPAFLNDNVMALLHEKFGLSGLTTPEQDFGHIINKNL.

Residues Cys-3, Cys-6, Cys-18, and Cys-25 each coordinate [2Fe-2S] cluster. 8 residues coordinate hybrid [4Fe-2O-2S] cluster: His-249, Glu-273, Cys-317, Cys-405, Cys-433, Cys-459, Glu-493, and Lys-495. Residue Cys-405 is modified to Cysteine persulfide.

The protein belongs to the HCP family. [2Fe-2S] cluster serves as cofactor. It depends on hybrid [4Fe-2O-2S] cluster as a cofactor.

It localises to the cytoplasm. The enzyme catalyses A + NH4(+) + H2O = hydroxylamine + AH2 + H(+). Its function is as follows. Catalyzes the reduction of hydroxylamine to form NH(3) and H(2)O. The sequence is that of Hydroxylamine reductase from Mannheimia succiniciproducens (strain KCTC 0769BP / MBEL55E).